We begin with the raw amino-acid sequence, 132 residues long: Small ribosomal subunit protein eS24 (132 aa).

The disordered stretch occupies residues 91–132; the sequence is LATHGLYEKKKTSRKQRTERQNRMKKVRSIKKASVGAAGKKN. A compositionally biased stretch (basic and acidic residues) spans 96-112; that stretch reads LYEKKKTSRKQRTERQN.

Belongs to the eukaryotic ribosomal protein eS24 family. Component of the small ribosomal subunit.

It is found in the cytoplasm. Functionally, component of the small ribosomal subunit. The ribosome is a large ribonucleoprotein complex responsible for the synthesis of proteins in the cell. Required for processing of pre-rRNA and maturation of 40S ribosomal subunits. The protein is Small ribosomal subunit protein eS24 (rps24) of Oryzias latipes (Japanese rice fish).